Here is a 347-residue protein sequence, read N- to C-terminus: Protein pelota homolog (347 aa).

This sequence belongs to the eukaryotic release factor 1 family. Pelota subfamily. In terms of assembly, monomer. A divalent metal cation serves as cofactor.

It is found in the cytoplasm. May function in recognizing stalled ribosomes, interact with stem-loop structures in stalled mRNA molecules, and effect endonucleolytic cleavage of the mRNA. May play a role in the release non-functional ribosomes and degradation of damaged mRNAs. Has endoribonuclease activity. The sequence is that of Protein pelota homolog from Methanococcoides burtonii (strain DSM 6242 / NBRC 107633 / OCM 468 / ACE-M).